We begin with the raw amino-acid sequence, 545 residues long: Sterol O-acyltransferase 1 (545 aa).

Met-1 is modified (N-acetylmethionine). Residues 1–24 (MVGEETSLRNRLSRSAENPEQDEA) form a disordered region. The Cytoplasmic segment spans residues 1–133 (MVGEETSLRN…LDELFEVDHI (133 aa)). Position 7 is a phosphoserine (Ser-7). Over residues 9 to 18 (RNRLSRSAEN) the composition is skewed to polar residues. Residue His-132 coordinates cholesterol. Residues 134–155 (RTIYHMFIALLIIFILSTLVVD) traverse the membrane as a helical segment. At 156–175 (YIDEGRLVLEFSLLAYAFGQ) the chain is on the lumenal side. A helical transmembrane segment spans residues 176 to 201 (FPIVIWTWWAMFLSTLAIPYFLFQRW). The Cytoplasmic segment spans residues 202–213 (AHGYSKSSHPLI). The helical transmembrane segment at 214 to 239 (YSLIHGAFFLVFQLGILGFIPTYVVL) threads the bilayer. Residues 240–247 (AYTLPPAS) are Lumenal-facing. Residues 248–271 (RFILILEQIRLVMKAHSYVRENVP) traverse the membrane as a helical segment. Residues 272-314 (RVLSAAKEKSSTVPVPTVNQYLYFLFAPTLIYRDSYPRTPTVR) lie on the Cytoplasmic side of the membrane. A helical membrane pass occupies residues 315 to 347 (WGYVAMQFLQVFGCLFYVYYIFERLCAPLFRNI). Topologically, residues 348–364 (KQEPFSARVLVLCVFNS) are lumenal. A helical transmembrane segment spans residues 365–390 (ILPGVLMLFLSFFAFLHCWLNAFAEM). The Cytoplasmic portion of the chain corresponds to 391–438 (LRFGDRMFYKDWWNSTSYSNYYRTWNVVVHDWLYYYVYKDLLWFFSKR). The FYXDWWN motif signature appears at 398-404 (FYKDWWN). Residues Asn-410, Arg-413, Asn-416, His-420, Tyr-428, and Ser-451 each contribute to the an acyl-CoA site. The helical transmembrane segment at 439 to 463 (FRPAAMLAVFALSAVVHEYALAVCL) threads the bilayer. The active site involves His-455. Over 464-469 (SYFYPV) the chain is Lumenal. The chain crosses the membrane as a helical span at residues 470–485 (LFVLFMFFGMAFNFIV). Topologically, residues 486 to 491 (NDSRKR) are cytoplasmic. The chain crosses the membrane as a helical span at residues 492–523 (PVWNIMVRASLFLGHGVILCFYSQEWYARQRC). A disulfide bridge links Cys-523 with Cys-541. At 524-545 (PLKNPTFLDYVRPRTWTCRYVF) the chain is on the lumenal side.

Belongs to the membrane-bound acyltransferase family. Sterol o-acyltransferase subfamily. May form homo- or heterodimers. Interacts with UBIAD1.

It localises to the endoplasmic reticulum membrane. The enzyme catalyses a sterol + a long-chain fatty acyl-CoA = a long-chain 3-hydroxysterol ester + CoA. The catalysed reaction is cholesterol + an acyl-CoA = a cholesterol ester + CoA. It catalyses the reaction cholesterol + (9Z)-octadecenoyl-CoA = cholesteryl (9Z-octadecenoate) + CoA. It carries out the reaction cholesterol + hexadecanoyl-CoA = cholesteryl hexadecanoate + CoA. The enzyme catalyses octadecanoyl-CoA + cholesterol = cholesteryl octadecanoate + CoA. The catalysed reaction is (9Z,12Z)-octadecadienoyl-CoA + cholesterol = cholesteryl (9Z,12Z)-octadecadienoate + CoA. It catalyses the reaction (5Z,8Z,11Z,14Z)-eicosatetraenoyl-CoA + cholesterol = cholesteryl (5Z,8Z,11Z,14Z)-eicosatetraenoate + CoA. It carries out the reaction (9Z)-hexadecenoyl-CoA + cholesterol = cholesteryl (9Z)-hexadecenoate + CoA. The enzyme catalyses (11Z)-octadecenoyl-CoA + cholesterol = cholesteryl (11Z)-octadecenoate + CoA. The catalysed reaction is (7Z)-octadecenoyl-CoA + cholesterol = cholesteryl (7Z)-octadecenoate + CoA. Catalyzes the formation of fatty acid-cholesterol esters, which are less soluble in membranes than cholesterol. Plays a role in lipoprotein assembly and dietary cholesterol absorption. Preferentially utilizes oleoyl-CoA ((9Z)-octadecenoyl-CoA) as substrate: shows a higher activity towards an acyl-CoA substrate with a double bond at the delta-9 position (9Z) than towards saturated acyl-CoA or an unsaturated acyl-CoA with a double bond at the delta-7 (7Z) or delta-11 (11Z) positions. This chain is Sterol O-acyltransferase 1, found in Rattus norvegicus (Rat).